Consider the following 950-residue polypeptide: Glycine dehydrogenase (decarboxylating) (950 aa).

Lys698 is subject to N6-(pyridoxal phosphate)lysine.

Belongs to the GcvP family. The glycine cleavage system is composed of four proteins: P, T, L and H. It depends on pyridoxal 5'-phosphate as a cofactor.

The enzyme catalyses N(6)-[(R)-lipoyl]-L-lysyl-[glycine-cleavage complex H protein] + glycine + H(+) = N(6)-[(R)-S(8)-aminomethyldihydrolipoyl]-L-lysyl-[glycine-cleavage complex H protein] + CO2. In terms of biological role, the glycine cleavage system catalyzes the degradation of glycine. The P protein binds the alpha-amino group of glycine through its pyridoxal phosphate cofactor; CO(2) is released and the remaining methylamine moiety is then transferred to the lipoamide cofactor of the H protein. In Neisseria meningitidis serogroup C (strain 053442), this protein is Glycine dehydrogenase (decarboxylating).